A 299-amino-acid chain; its full sequence is Single myb histone 1 (299 aa).

An HTH myb-type domain is found at 1–61 (MGAPKQRWTP…KWRNLSVTAG (61 aa)). The segment at residues 28-57 (WRTILRDSDFSALLRLRSNVDLKDKWRNLS) is a DNA-binding region (H-T-H motif). The H15 domain occupies 124–192 (SVARLDDLIL…KVNQKYRIAP (69 aa)). Residues 238–279 (EEAAAFAAKAVAEAEVAIAEAEEAARVAEAAENDAEAAKAFL) adopt a coiled-coil conformation.

Belongs to the histone H1/H5 family. SMH subfamily. As to quaternary structure, forms a homodimer and heterodimers. In terms of tissue distribution, expressed in leaves.

The protein resides in the nucleus. The protein localises to the chromosome. It localises to the nucleolus. It is found in the telomere. Functionally, binds preferentially double-stranded telomeric repeats 5'-TTTAGGG-3', but can also bind to the single G-rich and C-rich telomeric strand. The sequence is that of Single myb histone 1 (SMH1) from Zea mays (Maize).